The chain runs to 650 residues: Phosphatidylinositol-3,5-bisphosphate 3-phosphatase MTMR14 (650 aa).

The interval 1-27 is disordered; that stretch reads MAGARAAAAAASAGSSASSGNQPPQEL. Lys-194 is subject to N6-acetyllysine. Residue Asn-226 is glycosylated (N-linked (GlcNAc...) asparagine). The active-site Phosphocysteine intermediate is the Cys-330. Gly-333, Trp-334, Asp-335, Arg-336, and Arg-382 together coordinate a 1,2-diacyl-sn-glycero-3-phospho-(1D-myo-inositol-3,5-bisphosphate). A 1,2-diacyl-sn-glycero-3-phospho-(1D-myo-inositol-3-phosphate) is bound by residues Gly-333, Trp-334, Asp-335, Arg-336, and Arg-382. A disordered region spans residues 476-546; sequence AAWRKSHSSS…PRSVDHPLPG (71 aa). Ser-518 carries the phosphoserine modification. N-linked (GlcNAc...) asparagine glycosylation is present at Asn-519. Phosphoserine is present on residues Ser-530, Ser-580, and Ser-624. Residue Arg-638 is modified to Omega-N-methylarginine.

This sequence belongs to the protein-tyrosine phosphatase family. Non-receptor class myotubularin subfamily. Expressed in various tissues, including heart, skeletal muscle, placenta, liver, lung, kidney and pancreas.

Its subcellular location is the cytoplasm. The enzyme catalyses a 1,2-diacyl-sn-glycero-3-phospho-(1D-myo-inositol-3,5-bisphosphate) + H2O = a 1,2-diacyl-sn-glycero-3-phospho-(1D-myo-inositol-5-phosphate) + phosphate. It catalyses the reaction a 1,2-diacyl-sn-glycero-3-phospho-(1D-myo-inositol-3-phosphate) + H2O = a 1,2-diacyl-sn-glycero-3-phospho-(1D-myo-inositol) + phosphate. Its function is as follows. Lipid phosphatase that specifically dephosphorylates the D-3 position of phosphatidylinositol 3-phosphate and phosphatidylinositol 3,5-bisphosphate, generating phosphatidylinositol and phosphatidylinositol 5-phosphate. This Homo sapiens (Human) protein is Phosphatidylinositol-3,5-bisphosphate 3-phosphatase MTMR14.